Here is a 313-residue protein sequence, read N- to C-terminus: Synaptophysin (313 aa).

Over methionine 1–proline 25 the chain is Cytoplasmic. In terms of domain architecture, MARVEL spans valine 21–glycine 227. Residues leucine 26 to glycine 49 traverse the membrane as a helical segment. Topologically, residues glutamate 50 to phenylalanine 106 are vesicular. Asparagine 59 carries an N-linked (GlcNAc...) asparagine glycan. A Phosphotyrosine modification is found at tyrosine 81. An N-linked (GlcNAc...) asparagine glycan is attached at asparagine 99. The helical transmembrane segment at phenylalanine 107–asparagine 130 threads the bilayer. The Cytoplasmic segment spans residues lysine 131 to lysine 137. The chain crosses the membrane as a helical span at residues glycine 138–alanine 161. Residues lysine 162–serine 199 are Vesicular-facing. Residues glycine 200–phenylalanine 223 traverse the membrane as a helical segment. The Cytoplasmic segment spans residues lysine 224 to methionine 313. Positions glycine 238 to methionine 313 are disordered. Residues alanine 253–glycine 263 show a composition bias toward gly residues. Residues glycine 254–glycine 304 form a repeats, Gly/Tyr-rich region. The segment covering proline 264–serine 283 has biased composition (low complexity). The segment covering serine 284–proline 302 has biased composition (gly residues).

This sequence belongs to the synaptophysin/synaptobrevin family. Homohexamer or homotetramer. Interacts with SRCIN1. Interacts with VAMP2; the interaction is inhibited by interaction of VAPM2 with SEPT8. In terms of processing, ubiquitinated; mediated by SIAH1 or SIAH2 and leading to its subsequent proteasomal degradation. Phosphorylated by SRC. In terms of tissue distribution, characteristic of a type of small (30-80 nm) neurosecretory vesicles, including presynaptic vesicles, but also vesicles of various neuroendocrine cells of both neuronal and epithelial phenotype.

It is found in the cytoplasmic vesicle. The protein localises to the secretory vesicle. The protein resides in the synaptic vesicle membrane. It localises to the synapse. Its subcellular location is the synaptosome. Its function is as follows. Possibly involved in structural functions as organizing other membrane components or in targeting the vesicles to the plasma membrane. Involved in the regulation of short-term and long-term synaptic plasticity. In Bos taurus (Bovine), this protein is Synaptophysin (SYP).